Consider the following 106-residue polypeptide: Isocitrate dehydrogenase [NAD] subunit gamma, mitochondrial (106 aa).

It belongs to the isocitrate and isopropylmalate dehydrogenases family. Heterooligomer of subunits alpha (IDH3A), beta (IDH3B), and gamma (IDH3G) in the apparent ratio of 2:1:1. The heterodimer containing one IDH3A and one IDH3B subunit and the heterodimer containing one IDH3A and one IDH3G subunit assemble into a heterotetramer (which contains two subunits of IDH3A, one of IDH3B and one of IDH3G) and further into the heterooctamer.

The protein resides in the mitochondrion. Its activity is regulated as follows. The heterotetramer and the heterodimer composed of IDH3A and IDH3G subunits can be allosterically activated by citrate (CIT) or/and ADP, and the two activators can act independently or synergistically. The heterodimer composed of IDH3A and IDH3B subunits cannot be allosterically regulated and the allosteric regulation of the heterotetramer is through the IDH3G subunit and not the IDH3B subunit. The IDH3G subunit contains the allosteric site which consists of a CIT-binding site and an ADP-binding site, and the binding of CIT and ADP causes conformational changes at the allosteric site which are transmitted to the active site in the catalytic subunit (IDH3A) through a cascade of conformational changes at the heterodimer interface, leading to stabilization of the isocitrate-binding at the active site and thus activation of the enzyme. ATP can activate the heterotetramer and the heterodimer composed of IDH3A and IDH3G subunits at low concentrations but inhibits their activities at high concentrations, whereas ATP exhibits only inhibitory effect on the heterodimer composed of IDH3A and IDH3B subunits. Its function is as follows. Regulatory subunit which plays a role in the allosteric regulation of the enzyme catalyzing the decarboxylation of isocitrate (ICT) into alpha-ketoglutarate. The heterodimer composed of the alpha (IDH3A) and beta (IDH3B) subunits and the heterodimer composed of the alpha (IDH3A) and gamma (IDH3G) subunits, have considerable basal activity but the full activity of the heterotetramer (containing two subunits of IDH3A, one of IDH3B and one of IDH3G) requires the assembly and cooperative function of both heterodimers. This chain is Isocitrate dehydrogenase [NAD] subunit gamma, mitochondrial (IDH3G), found in Sus scrofa (Pig).